Here is a 340-residue protein sequence, read N- to C-terminus: Polyporopepsin (340 aa).

The Peptidase A1 domain occupies 14-330 (YVVNVGVGSP…DTTNKRLGLA (317 aa)). The active site involves Asp-32. N-linked (GlcNAc...) asparagine glycosylation is present at Asn-192. Residue Asp-212 is part of the active site. An N-linked (GlcNAc...) asparagine glycan is attached at Asn-238.

This sequence belongs to the peptidase A1 family.

It carries out the reaction Milk clotting activity, broad specificity, but fails to cleave 15-Leu-|-Tyr-16 or 16-Tyr-|-Leu-17 of insulin B chain.. The chain is Polyporopepsin from Irpex lacteus (Milk-white toothed polypore).